A 75-amino-acid polypeptide reads, in one-letter code: Small ribosomal subunit protein bS18 (75 aa).

The protein belongs to the bacterial ribosomal protein bS18 family. In terms of assembly, part of the 30S ribosomal subunit. Forms a tight heterodimer with protein bS6.

Its function is as follows. Binds as a heterodimer with protein bS6 to the central domain of the 16S rRNA, where it helps stabilize the platform of the 30S subunit. This chain is Small ribosomal subunit protein bS18, found in Teredinibacter turnerae (strain ATCC 39867 / T7901).